Consider the following 466-residue polypeptide: A-type ATP synthase subunit B 2 (466 aa).

This sequence belongs to the ATPase alpha/beta chains family. As to quaternary structure, has multiple subunits with at least A(3), B(3), C, D, E, F, H, I and proteolipid K(x).

The protein localises to the cell membrane. Its function is as follows. Component of the A-type ATP synthase that produces ATP from ADP in the presence of a proton gradient across the membrane. The B chain is a regulatory subunit. The protein is A-type ATP synthase subunit B 2 of Methanospirillum hungatei JF-1 (strain ATCC 27890 / DSM 864 / NBRC 100397 / JF-1).